The chain runs to 626 residues: Leucine-rich repeat and fibronectin type-III domain-containing protein 3 (626 aa).

Residues 1–16 form the signal peptide; sequence MAVLPLLLCLLPLAPA. Over 17–539 the chain is Extracellular; that stretch reads SSPPQPATSS…PHAPFLGGTM (523 aa). In terms of domain architecture, LRRNT spans 19 to 59; that stretch reads PPQPATSSPCPRRCRCQTQSLPLSVLCPGAGLLFVPPSLDR. 6 LRR repeats span residues 84–105, 108–129, 132–153, 157–178, 181–202, and 205–226; these read GLLH…AFAD, ALRA…QLRG, NLRH…ALDD, TLED…ALGR, NVNT…AFSR, and KLAR…PLFS. An LRRCT domain is found at 249–295; that stretch reads NPLHCNCELVWLRRLAREDDLEACASPPALGGRYFWAVGEEEFVCEP. The Ig-like domain maps to 295–382; it reads PPVVTHRSPP…GEATAAVELT (88 aa). One can recognise a Fibronectin type-III 1 domain in the interval 308-395; it reads PAGRPAALRC…PPPPQLANST (88 aa). C317 and C366 are oxidised to a cystine. 3 N-linked (GlcNAc...) asparagine glycosylation sites follow: N339, N348, and N393. The segment at 382-423 is disordered; that stretch reads TVGPPPPPQLANSTSCDPPRDGEPDALTPPSAASASAKVADT. A compositionally biased stretch (low complexity) spans 406-423; that stretch reads DALTPPSAASASAKVADT. The 99-residue stretch at 425 to 523 folds into the Fibronectin type-III 2 domain; the sequence is APTDRGVQVT…GCARFSTEPA (99 aa). The helical transmembrane segment at 540–560 threads the bilayer; sequence IIALGGVIVASVLVFIFVLLL. Residues 561–626 are Cytoplasmic-facing; the sequence is RYKVHGVQPP…WGPSHEPAGP (66 aa).

Belongs to the LRFN family. Can form heteromeric complexes with LRFN1, LRFN2, LRFN4 and LRFN5. Able to form homomeric complexes across cell junctions, between adjacent cells. Does not interact with DLG4. In terms of processing, N-glycosylated. As to expression, expressed in brain. Within brain, expressed in hippocampus, cerebellum, olfactory bulb and forebrain (at protein level).

The protein localises to the cell membrane. The protein resides in the cell projection. Its subcellular location is the axon. It is found in the dendrite. It localises to the synapse. The protein localises to the presynaptic cell membrane. The protein resides in the postsynaptic cell membrane. In terms of biological role, cell adhesion molecule that mediates homophilic cell-cell adhesion in a Ca(2+)-independent manner. Promotes neurite outgrowth in hippocampal neurons. This is Leucine-rich repeat and fibronectin type-III domain-containing protein 3 from Rattus norvegicus (Rat).